Consider the following 125-residue polypeptide: Ribonuclease P protein component 1 (125 aa).

Positions 1 to 13 are enriched in basic and acidic residues; it reads MRRNGKEGKDRAP. The interval 1 to 24 is disordered; sequence MRRNGKEGKDRAPGRPQRKGQEVA.

It belongs to the eukaryotic/archaeal RNase P protein component 1 family. Consists of a catalytic RNA component and at least 4-5 protein subunits.

Its subcellular location is the cytoplasm. It catalyses the reaction Endonucleolytic cleavage of RNA, removing 5'-extranucleotides from tRNA precursor.. In terms of biological role, part of ribonuclease P, a protein complex that generates mature tRNA molecules by cleaving their 5'-ends. This is Ribonuclease P protein component 1 from Thermococcus onnurineus (strain NA1).